The sequence spans 328 residues: MSHSLRVIFAGTPEFAAAALAAIHGAGFPVPLVLTQPDRPAGRGMKLQASPVKRYAQEHGLAVAQPPSLRRAGKYPEQAAAAIGQLRATPHDVMVVAAYGLILPQEVLDIPPLGCINIHASLLPRWRGAAPIHRAIEAGDAETGITLMQMDVGLDTGAMISETRTAISGDDTTATLHDRLAQDGAKLIVEALVELERTGRLAATPQPAEGVTYAEKIGKHEAALDWRRPAAVLARQVRAFDPFPGGVGTLEDGTSIKIWAAIPADTKAGGAPGTIAEVTPEGVVVACGEGALRLTQLQKPGGKRLPVREFLAGSTLAVGQRFQLPEAK.

121–124 contributes to the (6S)-5,6,7,8-tetrahydrofolate binding site; it reads SLLP.

This sequence belongs to the Fmt family.

It carries out the reaction L-methionyl-tRNA(fMet) + (6R)-10-formyltetrahydrofolate = N-formyl-L-methionyl-tRNA(fMet) + (6S)-5,6,7,8-tetrahydrofolate + H(+). Functionally, attaches a formyl group to the free amino group of methionyl-tRNA(fMet). The formyl group appears to play a dual role in the initiator identity of N-formylmethionyl-tRNA by promoting its recognition by IF2 and preventing the misappropriation of this tRNA by the elongation apparatus. This chain is Methionyl-tRNA formyltransferase, found in Paraburkholderia xenovorans (strain LB400).